A 273-amino-acid polypeptide reads, in one-letter code: Formamidopyrimidine-DNA glycosylase (273 aa).

The Schiff-base intermediate with DNA role is filled by P2. Residue E3 is the Proton donor of the active site. The active-site Proton donor; for beta-elimination activity is the K58. The DNA site is built by H91, R110, and R153. The FPG-type zinc finger occupies K238–K272. R262 functions as the Proton donor; for delta-elimination activity in the catalytic mechanism.

It belongs to the FPG family. Monomer. The cofactor is Zn(2+).

The enzyme catalyses Hydrolysis of DNA containing ring-opened 7-methylguanine residues, releasing 2,6-diamino-4-hydroxy-5-(N-methyl)formamidopyrimidine.. It carries out the reaction 2'-deoxyribonucleotide-(2'-deoxyribose 5'-phosphate)-2'-deoxyribonucleotide-DNA = a 3'-end 2'-deoxyribonucleotide-(2,3-dehydro-2,3-deoxyribose 5'-phosphate)-DNA + a 5'-end 5'-phospho-2'-deoxyribonucleoside-DNA + H(+). Its function is as follows. Involved in base excision repair of DNA damaged by oxidation or by mutagenic agents. Acts as a DNA glycosylase that recognizes and removes damaged bases. Has a preference for oxidized purines, such as 7,8-dihydro-8-oxoguanine (8-oxoG). Has AP (apurinic/apyrimidinic) lyase activity and introduces nicks in the DNA strand. Cleaves the DNA backbone by beta-delta elimination to generate a single-strand break at the site of the removed base with both 3'- and 5'-phosphates. In Lactobacillus delbrueckii subsp. bulgaricus (strain ATCC 11842 / DSM 20081 / BCRC 10696 / JCM 1002 / NBRC 13953 / NCIMB 11778 / NCTC 12712 / WDCM 00102 / Lb 14), this protein is Formamidopyrimidine-DNA glycosylase.